Consider the following 573-residue polypeptide: Proline--tRNA ligase (573 aa).

The protein belongs to the class-II aminoacyl-tRNA synthetase family. ProS type 1 subfamily. As to quaternary structure, homodimer.

It localises to the cytoplasm. It carries out the reaction tRNA(Pro) + L-proline + ATP = L-prolyl-tRNA(Pro) + AMP + diphosphate. In terms of biological role, catalyzes the attachment of proline to tRNA(Pro) in a two-step reaction: proline is first activated by ATP to form Pro-AMP and then transferred to the acceptor end of tRNA(Pro). As ProRS can inadvertently accommodate and process non-cognate amino acids such as alanine and cysteine, to avoid such errors it has two additional distinct editing activities against alanine. One activity is designated as 'pretransfer' editing and involves the tRNA(Pro)-independent hydrolysis of activated Ala-AMP. The other activity is designated 'posttransfer' editing and involves deacylation of mischarged Ala-tRNA(Pro). The misacylated Cys-tRNA(Pro) is not edited by ProRS. This is Proline--tRNA ligase from Citrifermentans bemidjiense (strain ATCC BAA-1014 / DSM 16622 / JCM 12645 / Bem) (Geobacter bemidjiensis).